Consider the following 237-residue polypeptide: Myelin protein zero-like protein 3 (237 aa).

Residues 1 to 32 (MQLARGTVGGRGCALFPLLSILVVQGARIVLS) form the signal peptide. Residues 33-149 (LEISADAHVR…NIPLTELTVT (117 aa)) form the Ig-like V-type domain. At 33–159 (LEISADAHVR…ERGFGTMLSS (127 aa)) the chain is on the extracellular side. Cysteine 53 and cysteine 129 are disulfide-bonded. An N-linked (GlcNAc...) asparagine glycan is attached at asparagine 124. The helical transmembrane segment at 160 to 180 (VALLSILVFVPSAVVVILLLV) threads the bilayer. Residues 181-237 (RMGRKATGVQKRSRSGYKKSSIEVSDDTDQEDSNDCMTRLCVRCAECLDSDYEEEAY) are Cytoplasmic-facing.

Belongs to the myelin P0 protein family. In terms of tissue distribution, present in all tissues tested, including the skin. Present in the keratinocytes and sebocytes in the skin (at protein level).

It localises to the membrane. In terms of biological role, mediates homophilic cell-cell adhesion. The polypeptide is Myelin protein zero-like protein 3 (Mpzl3) (Mus musculus (Mouse)).